The primary structure comprises 354 residues: Guanine nucleotide-binding protein G(q) subunit alpha (354 aa).

S-palmitoyl cysteine attachment occurs at residues Cys3 and Cys4. One can recognise a G-alpha domain in the interval Arg32 to Val354. The tract at residues Lys35 to Thr48 is G1 motif. GTP contacts are provided by residues Gly40–Ser47, Leu174–Thr180, Asp199–Gln203, Asn269–Asp272, and Ala326. Mg(2+)-binding residues include Ser47 and Thr180. The G2 motif stretch occupies residues Asp172–Thr180. The tract at residues Phe195–Arg204 is G3 motif. The segment at Ile265–Asp272 is G4 motif. Residues Thr324–Thr329 form a G5 motif region.

Belongs to the G-alpha family. G(q) subfamily. G proteins are composed of 3 units; alpha, beta and gamma. The alpha chain contains the guanine nucleotide binding site. In terms of tissue distribution, a high concentration was found in the retinal light-sensitive outer segment.

In terms of biological role, guanine nucleotide-binding proteins (G proteins) are involved as modulators or transducers in various transmembrane signaling systems. The G(q) alpha subunit is involved in the light-dependent activation of phospholipase C. The polypeptide is Guanine nucleotide-binding protein G(q) subunit alpha (Loligo forbesii (Veined squid)).